The primary structure comprises 75 residues: Small ribosomal subunit protein bS16 (75 aa).

This sequence belongs to the bacterial ribosomal protein bS16 family.

In Campylobacter fetus subsp. fetus (strain 82-40), this protein is Small ribosomal subunit protein bS16.